Here is a 637-residue protein sequence, read N- to C-terminus: GTP-binding protein 4 (637 aa).

Ala2 carries the N-acetylalanine modification. Lys103 is modified (N6-acetyllysine; alternate). Lys103 participates in a covalent cross-link: Glycyl lysine isopeptide (Lys-Gly) (interchain with G-Cter in SUMO2); alternate. Ser122 is subject to Phosphoserine. In terms of domain architecture, OBG-type G spans 169 to 340 (RTLLLCGYPN…VKTEACDRLL (172 aa)). GTP-binding positions include 175-182 (GYPNVGKS), 221-225 (DTPGI), and 289-292 (SKCE). A Glycyl lysine isopeptide (Lys-Gly) (interchain with G-Cter in SUMO2) cross-link involves residue Lys332. Disordered regions lie at residues 499–518 (SKEKNTQGPRMPRTAKKVQR) and 525–637 (MRSL…KERR). Lys535 is covalently cross-linked (Glycyl lysine isopeptide (Lys-Gly) (interchain with G-Cter in SUMO2)). Residues 542–555 (VRARRSRSVTRKRK) show a composition bias toward basic residues. Ser559 carries the post-translational modification Phosphoserine. Residues 563-574 (SSIARSRSRSCS) are compositionally biased toward low complexity. Positions 576-588 (TPRDVSGLRDVKM) are enriched in basic and acidic residues. A compositionally biased stretch (basic residues) spans 589-607 (VKKAKTMMKKAQKKMNRLG). The span at 608–621 (KKGEADRHVFDMKP) shows a compositional bias: basic and acidic residues. The segment covering 622-637 (KHLLSGKRKAGKKERR) has biased composition (basic residues).

It belongs to the TRAFAC class OBG-HflX-like GTPase superfamily. OBG GTPase family. NOG subfamily. Associates with pre-60S ribosomal particles. Interacts with MINAS-60 (product of an alternative open reading frame of RBM10).

The protein resides in the nucleus. The protein localises to the nucleolus. Involved in the biogenesis of the 60S ribosomal subunit. Acts as TP53 repressor, preventing TP53 stabilization and cell cycle arrest. In Rattus norvegicus (Rat), this protein is GTP-binding protein 4 (Gtpbp4).